We begin with the raw amino-acid sequence, 465 residues long: UDP-N-acetylmuramate--L-alanine ligase (465 aa).

112–118 (GTHGKTT) lines the ATP pocket.

It belongs to the MurCDEF family.

It localises to the cytoplasm. It catalyses the reaction UDP-N-acetyl-alpha-D-muramate + L-alanine + ATP = UDP-N-acetyl-alpha-D-muramoyl-L-alanine + ADP + phosphate + H(+). It functions in the pathway cell wall biogenesis; peptidoglycan biosynthesis. Functionally, cell wall formation. The protein is UDP-N-acetylmuramate--L-alanine ligase of Burkholderia lata (strain ATCC 17760 / DSM 23089 / LMG 22485 / NCIMB 9086 / R18194 / 383).